A 338-amino-acid polypeptide reads, in one-letter code: Electron transfer flavoprotein subunit alpha (338 aa).

Ile-275–Asp-303 is a binding site for FAD.

The protein belongs to the ETF alpha-subunit/FixB family. In terms of assembly, heterodimer of an alpha and a beta subunit. FAD is required as a cofactor.

In terms of biological role, the electron transfer flavoprotein serves as a specific electron acceptor for other dehydrogenases. It transfers the electrons to the main respiratory chain via ETF-ubiquinone oxidoreductase (ETF dehydrogenase). This is Electron transfer flavoprotein subunit alpha (etfA) from Megasphaera elsdenii.